The following is a 28-amino-acid chain: Cruzioseptin-4 (28 aa).

Glutamate 25 is modified (glutamic acid 1-amide). The propeptide occupies 27–28 (EH).

As to expression, expressed by the skin glands.

Its subcellular location is the secreted. Has antimicrobial activity. This is Cruzioseptin-4 from Cruziohyla calcarifer (Splendid leaf frog).